The sequence spans 396 residues: Elongation factor Tu (396 aa).

A tr-type G domain is found at 10 to 206 (KPHINVGTIG…ALDSYIPEPQ (197 aa)). Residues 19-26 (GHVDHGKT) are G1. Position 19 to 26 (19 to 26 (GHVDHGKT)) interacts with GTP. Threonine 26 contacts Mg(2+). Residues 60–64 (GITIN) form a G2 region. Positions 81-84 (DCPG) are G3. Residues 81–85 (DCPGH) and 136–139 (NKAD) contribute to the GTP site. The G4 stretch occupies residues 136–139 (NKAD). A G5 region spans residues 174 to 176 (SAL).

Belongs to the TRAFAC class translation factor GTPase superfamily. Classic translation factor GTPase family. EF-Tu/EF-1A subfamily. As to quaternary structure, monomer.

The protein resides in the cytoplasm. The catalysed reaction is GTP + H2O = GDP + phosphate + H(+). Functionally, GTP hydrolase that promotes the GTP-dependent binding of aminoacyl-tRNA to the A-site of ribosomes during protein biosynthesis. This is Elongation factor Tu from Nitrosospira multiformis (strain ATCC 25196 / NCIMB 11849 / C 71).